A 501-amino-acid chain; its full sequence is Cytokinin dehydrogenase 2 (501 aa).

The N-terminal stretch at 1–22 (MANLRLMITLITVLMITKSSNG) is a signal peptide. 2 N-linked (GlcNAc...) asparagine glycosylation sites follow: Asn32 and Asn51. An FAD-binding PCMH-type domain is found at 53-226 (TTVTPGGVIC…TRARIVLDHA (174 aa)). 3 residues coordinate FAD: Ala87, Gly89, and Gly91. At His92 the chain carries Pros-8alpha-FAD histidine. Ser93 and Gln97 together coordinate FAD. A glycan (N-linked (GlcNAc...) asparagine) is linked at Asn107. Residues Asp150, Thr155, Ser161, Ile165, Ile216, Tyr460, Ser495, and Gln498 each contribute to the FAD site.

It belongs to the oxygen-dependent FAD-linked oxidoreductase family. Requires FAD as cofactor. As to expression, expressed in the shoot apex, in stipules, and occasionally in the most apical part of the inflorescence stems. Not detected in roots.

It localises to the endoplasmic reticulum. Its subcellular location is the secreted. The protein resides in the extracellular space. The enzyme catalyses N(6)-dimethylallyladenine + A + H2O = 3-methyl-2-butenal + adenine + AH2. Catalyzes the oxidation of cytokinins, a family of N(6)-substituted adenine derivatives that are plant hormones, where the substituent is an isopentenyl group. Modulates asymmetric cytokinin signaling in emerged lateral roots. Its activity determines cell elongation and number in emerged lateral roots and defines angular growth of lateral roots. The protein is Cytokinin dehydrogenase 2 (CKX2) of Arabidopsis thaliana (Mouse-ear cress).